A 370-amino-acid chain; its full sequence is S-adenosylmethionine decarboxylase proenzyme (370 aa).

Residue Phe28 coordinates substrate. Active-site residues include Glu29 and Glu32. Position 85 (Glu85) interacts with substrate. Ser86 acts as the Schiff-base intermediate with substrate; via pyruvic acid in catalysis. Ser86 is subject to Pyruvic acid (Ser); by autocatalysis. Catalysis depends on Cys100, which acts as the Proton donor; for catalytic activity. Catalysis depends on proton acceptor; for processing activity residues Ser250 and His263. Glu267 lines the substrate pocket.

The protein belongs to the eukaryotic AdoMetDC family. As to quaternary structure, forms a heterodimer with catalytically inactive AdoMetDC prozyme; heterodimerization is required to activate AdoMetDC. Pyruvate is required as a cofactor. In terms of processing, is synthesized initially as an inactive proenzyme. Formation of the active enzyme involves a self-maturation process in which the active site pyruvoyl group is generated from an internal serine residue via an autocatalytic post-translational modification. Two non-identical subunits are generated from the proenzyme in this reaction, and the pyruvate is formed at the N-terminus of the alpha chain, which is derived from the carboxyl end of the proenzyme. The post-translation cleavage follows an unusual pathway, termed non-hydrolytic serinolysis, in which the side chain hydroxyl group of the serine supplies its oxygen atom to form the C-terminus of the beta chain, while the remainder of the serine residue undergoes an oxidative deamination to the alpha chain.

It catalyses the reaction S-adenosyl-L-methionine + H(+) = S-adenosyl 3-(methylsulfanyl)propylamine + CO2. It participates in amine and polyamine biosynthesis; S-adenosylmethioninamine biosynthesis; S-adenosylmethioninamine from S-adenosyl-L-methionine: step 1/1. With respect to regulation, allosterically activated by AdoMetDC prozyme. Activated by putrescine. Inhibited by spermine and methylglyoxal-bis(guanylhydrazone) (MGBG) and slightly by spermidine. Inhibited by 5'-([(Z)-4-amino-2-butenyl]methylamino)-5'-deoxyadenosine (MDL 73811). Its function is as follows. Probably in association with catalytically inactive AdoMetDC prozyme, catalyzes the decarboxylation of S-adenosyl-L-methionine which is essential for the biosynthesis of the polyamine spermidine. Required for growth and survival during the bloodstream life cycle stage. The chain is S-adenosylmethionine decarboxylase proenzyme from Trypanosoma cruzi.